The following is a 190-amino-acid chain: Putative histone H1.6 (190 aa).

The disordered stretch occupies residues 1–29 (MSDVAVAETPAVKTPTKAPKANATKVPKV). Ser2 bears the N-acetylserine mark. The segment covering 9-29 (TPAVKTPTKAPKANATKVPKV) has biased composition (low complexity). Positions 34–110 (AHPPFINMVT…GATGRFRVAE (77 aa)) constitute an H15 domain. The disordered stretch occupies residues 141 to 190 (KKTGDKVKKAKSPKKIAKPAAKKATKSPSKKVAPKKAAAKPAKKTAALKA). A compositionally biased stretch (basic residues) spans 148–183 (KKAKSPKKIAKPAAKKATKSPSKKVAPKKAAAKPAK).

This sequence belongs to the histone H1/H5 family.

The protein localises to the nucleus. It localises to the chromosome. In terms of biological role, histones H1 are necessary for the condensation of nucleosome chains into higher-order structures. The sequence is that of Putative histone H1.6 (hil-6) from Caenorhabditis elegans.